The primary structure comprises 547 residues: MPVVTLYWDELERLVGADRDTILSRLPMLGCDIERVEDDHVDVEFFPNRPDLYSVEGVARALRGFLGIEKGLKSYSAVKGEWKITVEESVLAVRPRIVGCVVKGIRMTDEVIRSLMEVQEDLHWTIGRNRRKMAIGVHDLSKVYFPLRYKAVDANFSFVPLDFDREMTVAEILEEHPKGKAYAFILEGKDSYPMIVDSKDEVISFPPIINAEKTRVTEETTDLFIDVTGFDENVDRAIAILACMLADRGGRIESVEVVYPDHVELTPNLDVRFMEVDVDEVNSLLGLSLSAEEIKESLEKMRFSCEIEGEKLKVGIPPYRADIMHEWDVIEDVAIGYGYENITPEIPPTLTFGRTHPWNDIRSLAKEIMIGLGFTEVITFTLTNEAVMYEKMRRKGEPWKDYVPVMHPLTTEHTILRTSLLPKLLELLSYNKHHEMPQMVFEVGDVVVNSKNRLHLAACITHSRANFSEIRSYVQAVMRELDLTWEVRESDDEAFIDGRRAEIVVDGKAVGVFGEVHPEVLEGFELTMPVSAFEIDLSAFFDTGELL.

Residues 269–344 enclose the B5 domain; sequence LDVRFMEVDV…IGYGYENITP (76 aa). Residues aspartate 322, aspartate 328, glutamate 331, and aspartate 332 each coordinate Mg(2+).

Belongs to the phenylalanyl-tRNA synthetase beta subunit family. Type 2 subfamily. Tetramer of two alpha and two beta subunits. It depends on Mg(2+) as a cofactor.

It is found in the cytoplasm. The catalysed reaction is tRNA(Phe) + L-phenylalanine + ATP = L-phenylalanyl-tRNA(Phe) + AMP + diphosphate + H(+). This chain is Phenylalanine--tRNA ligase beta subunit, found in Archaeoglobus fulgidus (strain ATCC 49558 / DSM 4304 / JCM 9628 / NBRC 100126 / VC-16).